A 238-amino-acid polypeptide reads, in one-letter code: Aspirochlorine biosynthesis protein N (238 aa).

This sequence belongs to the asaB hydroxylase/desaturase family.

The protein operates within mycotoxin biosynthesis. Functionally, part of the gene cluster that mediates the biosynthesis of aspirochlorine (or antibiotic A30641), an unusual halogenated spiro compound with distinctive antifungal properties due to selective inhibition of protein biosynthesis, and which is also active against bacteria, viruses, and murine tumor cells. The non-ribosomal peptide synthetase (NRPS) aclP is responsible the formation of the diketopiperazine (DKP) core from the condensation of 2 phenylalanine residues. One Phe residue is tailored into chlorotyrosine by hydroxylation and chlorination, whereas the second Phe undergoes an unprecedented C-C bond cleavage to be converted into glycine. After formation of the DKP, sulfur is incorporated into the DKP by conjugation with glutathione by aclG, followed by its stepwise degradation to the thiol by aclI, aclJ and aclK, and the dithiol oxidation by aclT. In addition, oxygenases (aclB, aclC, aclL and aclO) and O-methyltransferases (aclM and aclU) act as tailoring enzymes to produce the intermediate dechloroaspirochlorine. Ultimately, chlorination of dechloroaspirochlorine by the halogenase aclH is the last step in the aspirochlorine pathway. The sequence is that of Aspirochlorine biosynthesis protein N from Aspergillus oryzae (strain ATCC 42149 / RIB 40) (Yellow koji mold).